Consider the following 466-residue polypeptide: 3-isopropylmalate dehydratase large subunit (466 aa).

[4Fe-4S] cluster-binding residues include C347, C407, and C410.

Belongs to the aconitase/IPM isomerase family. LeuC type 1 subfamily. Heterodimer of LeuC and LeuD. Requires [4Fe-4S] cluster as cofactor.

The catalysed reaction is (2R,3S)-3-isopropylmalate = (2S)-2-isopropylmalate. Its pathway is amino-acid biosynthesis; L-leucine biosynthesis; L-leucine from 3-methyl-2-oxobutanoate: step 2/4. In terms of biological role, catalyzes the isomerization between 2-isopropylmalate and 3-isopropylmalate, via the formation of 2-isopropylmaleate. The polypeptide is 3-isopropylmalate dehydratase large subunit (Vibrio campbellii (strain ATCC BAA-1116)).